Here is a 157-residue protein sequence, read N- to C-terminus: 6,7-dimethyl-8-ribityllumazine synthase 1 (157 aa).

5-amino-6-(D-ribitylamino)uracil contacts are provided by residues Phe22, 53–55 (ALE), and 82–84 (TVI). A (2S)-2-hydroxy-3-oxobutyl phosphate-binding site is contributed by 87–88 (ET). His90 (proton donor) is an active-site residue. 5-amino-6-(D-ribitylamino)uracil is bound at residue Asn115. Arg129 contacts (2S)-2-hydroxy-3-oxobutyl phosphate.

This sequence belongs to the DMRL synthase family. As to quaternary structure, homopentamer.

The enzyme catalyses (2S)-2-hydroxy-3-oxobutyl phosphate + 5-amino-6-(D-ribitylamino)uracil = 6,7-dimethyl-8-(1-D-ribityl)lumazine + phosphate + 2 H2O + H(+). Its pathway is cofactor biosynthesis; riboflavin biosynthesis; riboflavin from 2-hydroxy-3-oxobutyl phosphate and 5-amino-6-(D-ribitylamino)uracil: step 1/2. Functionally, catalyzes the formation of 6,7-dimethyl-8-ribityllumazine by condensation of 5-amino-6-(D-ribitylamino)uracil with 3,4-dihydroxy-2-butanone 4-phosphate. This is the penultimate step in the biosynthesis of riboflavin. This is 6,7-dimethyl-8-ribityllumazine synthase 1 (ribH1) from Brucella melitensis biotype 1 (strain ATCC 23456 / CCUG 17765 / NCTC 10094 / 16M).